The chain runs to 490 residues: Cysteine protease 1 (490 aa).

An N-terminal signal peptide occupies residues 1–31; the sequence is MAGGGGKSVAAALAMACFLLILAAFAPPAAA. Positions 32-154 are cleaved as a propeptide — activation peptide; the sequence is APPDIMSIIR…EAYRHDGVEA (123 aa). 5 cysteine pairs are disulfide-bonded: Cys-177–Cys-220, Cys-211–Cys-253, Cys-311–Cys-364, Cys-395–Cys-407, and Cys-401–Cys-422. Cys-180 is a catalytic residue. Residues His-317 and Asn-339 contribute to the active site. Asn-356 carries N-linked (GlcNAc...) asparagine glycosylation. A propeptide spans 379 to 490 (removed in mature form); the sequence is NPKPSPPSPA…FVVLNREDLV (112 aa).

It belongs to the peptidase C1 family. As to expression, highly expressed in the tapetum and developing pollen of the anther locules. Weakly expressed in root and germinating seed, hardly in the anther-less-flower and not detected in leaf.

Functionally, cysteine protease that may play a role in pollen development. May be regulated by the transcription factor UDT1 in developing anthers and play a role in tapetum development. Positively regulated by the transcription factor TDR in developing anthers and may play a role in tapetum programmed cell death (PCD). The polypeptide is Cysteine protease 1 (CP1) (Oryza sativa subsp. japonica (Rice)).